We begin with the raw amino-acid sequence, 404 residues long: Cysteine desulfurase IscS (404 aa).

Pyridoxal 5'-phosphate is bound by residues 75 to 76, Asn155, Gln183, and 203 to 205; these read AT and SAH. Lys206 is subject to N6-(pyridoxal phosphate)lysine. Thr243 lines the pyridoxal 5'-phosphate pocket. Cys328 functions as the Cysteine persulfide intermediate in the catalytic mechanism. A [2Fe-2S] cluster-binding site is contributed by Cys328.

The protein belongs to the class-V pyridoxal-phosphate-dependent aminotransferase family. NifS/IscS subfamily. In terms of assembly, homodimer. Forms a heterotetramer with IscU, interacts with other sulfur acceptors. Pyridoxal 5'-phosphate serves as cofactor.

Its subcellular location is the cytoplasm. The enzyme catalyses (sulfur carrier)-H + L-cysteine = (sulfur carrier)-SH + L-alanine. Its pathway is cofactor biosynthesis; iron-sulfur cluster biosynthesis. In terms of biological role, master enzyme that delivers sulfur to a number of partners involved in Fe-S cluster assembly, tRNA modification or cofactor biosynthesis. Catalyzes the removal of elemental sulfur atoms from cysteine to produce alanine. Functions as a sulfur delivery protein for Fe-S cluster synthesis onto IscU, an Fe-S scaffold assembly protein, as well as other S acceptor proteins. This is Cysteine desulfurase IscS from Pseudomonas putida (strain W619).